The chain runs to 869 residues: DNA mismatch repair protein MutS (869 aa).

602–609 contacts ATP; sequence GPNMSGKS.

It belongs to the DNA mismatch repair MutS family.

In terms of biological role, this protein is involved in the repair of mismatches in DNA. It is possible that it carries out the mismatch recognition step. This protein has a weak ATPase activity. This chain is DNA mismatch repair protein MutS, found in Bacillus licheniformis (strain ATCC 14580 / DSM 13 / JCM 2505 / CCUG 7422 / NBRC 12200 / NCIMB 9375 / NCTC 10341 / NRRL NRS-1264 / Gibson 46).